Consider the following 443-residue polypeptide: ATP-dependent protease ATPase subunit HslU (443 aa).

ATP is bound by residues isoleucine 19, 61–66, aspartate 256, glutamate 321, and arginine 393; that span reads GVGKTE.

Belongs to the ClpX chaperone family. HslU subfamily. As to quaternary structure, a double ring-shaped homohexamer of HslV is capped on each side by a ring-shaped HslU homohexamer. The assembly of the HslU/HslV complex is dependent on binding of ATP.

The protein localises to the cytoplasm. Its function is as follows. ATPase subunit of a proteasome-like degradation complex; this subunit has chaperone activity. The binding of ATP and its subsequent hydrolysis by HslU are essential for unfolding of protein substrates subsequently hydrolyzed by HslV. HslU recognizes the N-terminal part of its protein substrates and unfolds these before they are guided to HslV for hydrolysis. In Cupriavidus pinatubonensis (strain JMP 134 / LMG 1197) (Cupriavidus necator (strain JMP 134)), this protein is ATP-dependent protease ATPase subunit HslU.